A 105-amino-acid chain; its full sequence is UPF0045 protein ECM15 (105 aa).

It belongs to the UPF0045 family.

This is UPF0045 protein ECM15 (ECM15) from Eremothecium gossypii (strain ATCC 10895 / CBS 109.51 / FGSC 9923 / NRRL Y-1056) (Yeast).